The following is a 243-amino-acid chain: Ribosomal RNA small subunit methyltransferase J (243 aa).

Residues 112–113 and aspartate 164 each bind S-adenosyl-L-methionine; that span reads ER.

It belongs to the methyltransferase superfamily. RsmJ family.

The protein localises to the cytoplasm. It catalyses the reaction guanosine(1516) in 16S rRNA + S-adenosyl-L-methionine = N(2)-methylguanosine(1516) in 16S rRNA + S-adenosyl-L-homocysteine + H(+). Functionally, specifically methylates the guanosine in position 1516 of 16S rRNA. The protein is Ribosomal RNA small subunit methyltransferase J of Legionella pneumophila (strain Corby).